A 530-amino-acid polypeptide reads, in one-letter code: Phosphoenolpyruvate carboxykinase (ATP) (530 aa).

Substrate is bound by residues Arg60, Tyr195, and Lys201. ATP is bound by residues Lys201, His221, and 237–245; that span reads GLSGTGKTT. Mn(2+)-binding residues include Lys201 and His221. Residue Asp258 participates in Mn(2+) binding. ATP is bound by residues Glu286, Arg324, and Ser449. Residue Arg324 participates in substrate binding.

Belongs to the phosphoenolpyruvate carboxykinase (ATP) family. It depends on Mn(2+) as a cofactor.

The protein localises to the cytoplasm. It carries out the reaction oxaloacetate + ATP = phosphoenolpyruvate + ADP + CO2. It functions in the pathway carbohydrate biosynthesis; gluconeogenesis. Its function is as follows. Involved in the gluconeogenesis. Catalyzes the conversion of oxaloacetate (OAA) to phosphoenolpyruvate (PEP) through direct phosphoryl transfer between the nucleoside triphosphate and OAA. In Geotalea uraniireducens (strain Rf4) (Geobacter uraniireducens), this protein is Phosphoenolpyruvate carboxykinase (ATP).